We begin with the raw amino-acid sequence, 504 residues long: Sodium-coupled neutral amino acid symporter 2 (504 aa).

A disordered region spans residues 1–22 (MKKTEMGRFNISPDEDSSSYSS). The Cytoplasmic segment spans residues 1-76 (MKKTEMGRFN…HPGTTSFGMS (76 aa)). The regulates protein turnover upon amino acid deprivation stretch occupies residues 1–96 (MKKTEMGRFN…SGILGLSYAM (96 aa)). Ser12, Ser21, Ser22, and Ser55 each carry phosphoserine. The helical transmembrane segment at 77–96 (VFNLSNAIVGSGILGLSYAM) threads the bilayer. Residue Asn82 participates in Na(+) binding. The Extracellular portion of the chain corresponds to 97–102 (ANTGIA). The helical transmembrane segment at 103–123 (LFIILLTFVSIFSLYSVHLLL) threads the bilayer. Topologically, residues 124–158 (KTANEGGSLLYEQLGHKAYGLAGKLAASGSITMQN) are cytoplasmic. Residues 159-177 (IGAMSSYLFIVKYELPLVI) traverse the membrane as a helical segment. Residues 178-188 (KALMNIEDTNG) lie on the Extracellular side of the membrane. The chain crosses the membrane as a helical span at residues 189–209 (LWYLNGDYLVLLVSFVLILPL). Residues 210–217 (SLLRNLGY) are Cytoplasmic-facing. A helical membrane pass occupies residues 218-238 (LGYTSGLSLLCMIFFLIVVIC). The Extracellular portion of the chain corresponds to 239-290 (KKFQIPCPVEVALMANETVNGTFTQVALAALASNSTAADTCRPRYFIFNSQT). An intrachain disulfide couples Cys245 to Cys279. Asn254, Asn258, and Asn272 each carry an N-linked (GlcNAc...) asparagine glycan. A helical transmembrane segment spans residues 291-311 (VYAVPILTFSFVCHPAVLPIY). Topologically, residues 312–327 (EELKSRSRRRMMNVSK) are cytoplasmic. Residues 328–348 (ISFFAMFLMYLLAALFGYLTF) form a helical membrane-spanning segment. Residues 349–369 (YEHVESELLHTYSAIVGTDIL) are Extracellular-facing. Residues 370-390 (LLVVRLAVLVAVTLTVPVVIF) traverse the membrane as a helical segment. Residue Thr384 coordinates Na(+). The Cytoplasmic portion of the chain corresponds to 391-411 (PIRSSVTHLLCPTKEFSWFRH). The chain crosses the membrane as a helical span at residues 412-432 (SVITVTILAFTNLLVIFVPTI). Residues 433–434 (RD) are Extracellular-facing. Residues 435 to 455 (IFGFIGASAAAMLIFILPSAF) form a helical membrane-spanning segment. The Cytoplasmic portion of the chain corresponds to 456–470 (YIKLVKKEPMRSVQK). Residues 471-493 (IGALCFLLSGVVVMIGSMGLIVL) traverse the membrane as a helical segment. Residues 494–504 (DWVHDASAGGH) lie on the Extracellular side of the membrane.

Belongs to the amino acid/polyamine transporter 2 family. In terms of processing, polyubiquitination by NEDD4L regulates the degradation and the activity of SLC38A2. As to expression, widely expressed. Expressed in skeletal muscle and adipose tissue (at protein level). Expressed by glutamatergic and GABAergic neurons together with astrocytes and other non-neuronal cells in the cerebral cortex (at protein level). Widely expressed in the central nervous systeme where, it is enriched in the spinal cord and the brainstem nuclei, especially those of the auditory system.

The protein localises to the cell membrane. The enzyme catalyses L-alanine(in) + Na(+)(in) = L-alanine(out) + Na(+)(out). It catalyses the reaction glycine(in) + Na(+)(in) = glycine(out) + Na(+)(out). It carries out the reaction L-serine(in) + Na(+)(in) = L-serine(out) + Na(+)(out). The catalysed reaction is L-proline(in) + Na(+)(in) = L-proline(out) + Na(+)(out). The enzyme catalyses L-methionine(in) + Na(+)(in) = L-methionine(out) + Na(+)(out). It catalyses the reaction L-histidine(in) + Na(+)(in) = L-histidine(out) + Na(+)(out). It carries out the reaction L-asparagine(in) + Na(+)(in) = L-asparagine(out) + Na(+)(out). The catalysed reaction is L-glutamine(in) + Na(+)(in) = L-glutamine(out) + Na(+)(out). The enzyme catalyses L-threonine(in) + Na(+)(in) = L-threonine(out) + Na(+)(out). It catalyses the reaction L-leucine(in) + Na(+)(in) = L-leucine(out) + Na(+)(out). It carries out the reaction L-phenylalanine(in) + Na(+)(in) = L-phenylalanine(out) + Na(+)(out). With respect to regulation, inhibited by N-methyl-D-glucamine. Inhibited by choline. Allosteric regulation of sodium ions binding by pH. Functionally, symporter that cotransports neutral amino acids and sodium ions from the extracellular to the intracellular side of the cell membrane. The transport is pH-sensitive, Li(+)-intolerant, electrogenic, driven by the Na(+) electrochemical gradient and cotransports of neutral amino acids and sodium ions with a stoichiometry of 1:1. May function in the transport of amino acids at the blood-brain barrier. May function in the transport of amino acids in the supply of maternal nutrients to the fetus through the placenta. Maintains a key metabolic glutamine/glutamate balance underpinning retrograde signaling by dendritic release of the neurotransmitter glutamate. Transports L-proline in differentiating osteoblasts for the efficient synthesis of proline-enriched proteins and provides proline essential for osteoblast differentiation and bone formation during bone development. This is Sodium-coupled neutral amino acid symporter 2 from Rattus norvegicus (Rat).